Here is a 71-residue protein sequence, read N- to C-terminus: Translation initiation factor IF-1 (71 aa).

Positions 1–71 (MANDVIEIEG…TKGRITYRFR (71 aa)) constitute an S1-like domain.

It belongs to the IF-1 family. Component of the 30S ribosomal translation pre-initiation complex which assembles on the 30S ribosome in the order IF-2 and IF-3, IF-1 and N-formylmethionyl-tRNA(fMet); mRNA recruitment can occur at any time during PIC assembly.

The protein resides in the cytoplasm. Functionally, one of the essential components for the initiation of protein synthesis. Stabilizes the binding of IF-2 and IF-3 on the 30S subunit to which N-formylmethionyl-tRNA(fMet) subsequently binds. Helps modulate mRNA selection, yielding the 30S pre-initiation complex (PIC). Upon addition of the 50S ribosomal subunit IF-1, IF-2 and IF-3 are released leaving the mature 70S translation initiation complex. In Leuconostoc mesenteroides subsp. mesenteroides (strain ATCC 8293 / DSM 20343 / BCRC 11652 / CCM 1803 / JCM 6124 / NCDO 523 / NBRC 100496 / NCIMB 8023 / NCTC 12954 / NRRL B-1118 / 37Y), this protein is Translation initiation factor IF-1.